We begin with the raw amino-acid sequence, 201 residues long: dTTP/UTP pyrophosphatase (201 aa).

D73 acts as the Proton acceptor in catalysis.

This sequence belongs to the Maf family. YhdE subfamily. A divalent metal cation serves as cofactor.

It localises to the cytoplasm. It catalyses the reaction dTTP + H2O = dTMP + diphosphate + H(+). The enzyme catalyses UTP + H2O = UMP + diphosphate + H(+). Nucleoside triphosphate pyrophosphatase that hydrolyzes dTTP and UTP. May have a dual role in cell division arrest and in preventing the incorporation of modified nucleotides into cellular nucleic acids. This is dTTP/UTP pyrophosphatase from Pseudomonas aeruginosa (strain ATCC 15692 / DSM 22644 / CIP 104116 / JCM 14847 / LMG 12228 / 1C / PRS 101 / PAO1).